A 68-amino-acid chain; its full sequence is MKIIVFLAVLMLVSAQVCLVSAAEMEHSSDNELSSRDLVKRFPLPSCVYTRTCGKRDIESSEGANGGE.

An N-terminal signal peptide occupies residues 1–15 (MKIIVFLAVLMLVSA). A propeptide spanning residues 16 to 41 (QVCLVSAAEMEHSSDNELSSRDLVKR) is cleaved from the precursor. An intrachain disulfide couples cysteine 47 to cysteine 53. Cysteine 53 bears the Cysteine amide mark. Residues 57–68 (DIESSEGANGGE) constitute a propeptide that is removed on maturation.

Expressed by the skin glands.

It localises to the secreted. This is Riparin-1.6 from Crinia riparia (Streambank froglet).